The chain runs to 1594 residues: Calpain-D (1594 aa).

RanBP2-type zinc fingers lie at residues 1–35 (MGTI…VRKV) and 135–164 (LNRR…VSYL). 5 disordered regions span residues 210–256 (EEQH…TAID), 371–400 (EPQQ…NPTQ), 420–459 (ASSS…SSSG), 524–543 (KKKQ…GSGE), and 554–606 (AGLG…RLSG). The span at 215 to 229 (HQLHSQHLHKRHLKG) shows a compositional bias: basic residues. 2 stretches are compositionally biased toward polar residues: residues 246–255 (RRTQSLSTAI) and 371–385 (EPQQ…QLQR). S250 carries the post-translational modification Phosphoserine. A compositionally biased stretch (low complexity) spans 438 to 459 (NSNSNSSGNSNIINNNSSSSSG). Over residues 528–541 (QIASESQTNNNTGS) the composition is skewed to polar residues. The segment at 643–673 (RSKMWICIKCSYAYNRLWLQTCEMCEAKAEQ) adopts a RanBP2-type 3 zinc-finger fold. Residues 684–703 (QQQQQQHHHHHLQQQQAEAP) form a disordered region. 2 RanBP2-type zinc fingers span residues 704–733 (RDEP…SKLK) and 744–774 (RKGE…HRQP). Disordered stretches follow at residues 786–811 (RPDG…HQSG) and 860–884 (SLQQ…GSIV). Residues 860 to 871 (SLQQQRNSSSSG) are compositionally biased toward polar residues. A RanBP2-type 6 zinc finger spans residues 927–956 (STKKWQCPACTYDNCAASVVCDICSSPRGL). Residues 1014 to 1321 (LFVDDSFPPA…FDCIDICKVR (308 aa)) enclose the Calpain catalytic domain. Active-site residues include C1079, H1245, and N1265.

This sequence belongs to the peptidase C2 family.

Its function is as follows. Has a role in eye development. Calcium-regulated non-lysosomal thiol-protease. In Drosophila melanogaster (Fruit fly), this protein is Calpain-D (sol).